A 542-amino-acid polypeptide reads, in one-letter code: Cytochrome P450 monooxygenase sdnH (542 aa).

A helical transmembrane segment spans residues leucine 25–tyrosine 45. Positions isoleucine 141–aspartate 160 are disordered. A helical transmembrane segment spans residues phenylalanine 340–leucine 360. Cysteine 483 contacts heme. Asparagine 506 carries an N-linked (GlcNAc...) asparagine glycan.

The protein belongs to the cytochrome P450 family. The cofactor is heme.

It is found in the membrane. Its pathway is antibiotic biosynthesis. Its function is as follows. Cytochrome P450 monooxygenase; part of the gene cluster that mediates the biosynthesis of sordarin and hypoxysordarin, glycoside antibiotics with a unique tetracyclic diterpene aglycone structure. First, the geranylgeranyl diphosphate synthase sdnC constructs GGDP from farnesyl diphosphate and isopentenyl diphosphate. The diterpene cyclase sdnA then catalyzes the cyclization of GGDP to afford cycloaraneosene. Cycloaraneosene is then hydroxylated four times by the putative cytochrome P450 monooxygenases sdnB, sdnE, sdnF and sdnH to give a hydroxylated cycloaraneosene derivative such as cycloaraneosene-8,9,13,19-tetraol. Although the order of the hydroxylations is unclear, at least C8, C9 and C13 of the cycloaraneosene skeleton are hydroxylated before the sordaricin formation. Dehydration of the 13-hydroxy group of the hydroxylated cycloaraneosene derivative might be catalyzed by an unassigned hypothetical protein such as sdnG and sdnP to construct the cyclopentadiene moiety. The FAD-dependent oxidoreductase sdnN is proposed to catalyze the oxidation at C9 of the hydroxylated cycloaraneosene derivative and also catalyze the Baeyer-Villiger oxidation to give the lactone intermediate. The presumed lactone intermediate would be hydrolyzed to give an acrolein moiety and a carboxylate moiety. Then, [4+2]cycloaddition would occur between the acrolein moiety and the cyclopentadiene moiety to give sordaricin. SdnN might also be involved in the [4+2]cycloaddition after the hypothesized oxidation to accommodate the oxidized product and prompt the [4+2]cycloaddition. GDP-6-deoxy-D-altrose may be biosynthesized from GDP-D-mannose by the putative GDP-mannose-4,6-dehydratase sdnI and the short-chain dehydrogenase sdnK. The glycosyltransferase sdnJ catalyzes the attachment of 6-deoxy-D-altrose onto the 19-hydroxy group of sordaricin to give 4'-O-demethylsordarin. The methyltransferase sdnD would complete the biosynthesis of sordarin. Sordarin can be further modified into hypoxysordarin. The unique acyl chain at the 3'-hydroxy group of hypoxysordarin would be constructed by an iterative type I PKS sdnO and the trans-acting polyketide methyltransferase sdnL. SdnL would be responsible for the introduction of an alpha-methyl group of the polyketide chain. Alternatively, the beta-lactamase-like protein sdnR might be responsible for the cleavage and transfer of the polyketide chain from the PKS sdnO to sordarin. Two putative cytochrome P450 monooxygenases, sdnQ and sdnT, might catalyze the epoxidations of the polyketide chain to complete the biosynthesis of hypoxysordarin. Transcriptional regulators sdnM and sdnS are presumably encoded for the transcriptional regulation of the expression of the sdn gene cluster. The polypeptide is Cytochrome P450 monooxygenase sdnH (Sordaria araneosa (Pleurage araneosa)).